The primary structure comprises 389 residues: Chalcone synthase A (389 aa).

The active site involves Cys164.

This sequence belongs to the thiolase-like superfamily. Chalcone/stilbene synthases family. As to expression, major expressed member of the gene family in various floral tissues and in seedlings treated with UV light. It is relatively low expressed in tissue culture material.

The catalysed reaction is (E)-4-coumaroyl-CoA + 3 malonyl-CoA + 3 H(+) = 2',4,4',6'-tetrahydroxychalcone + 3 CO2 + 4 CoA. It functions in the pathway secondary metabolite biosynthesis; flavonoid biosynthesis. Its function is as follows. The primary product of this enzyme is 4,2',4',6'-tetrahydroxychalcone (also termed naringenin-chalcone or chalcone) which can under specific conditions spontaneously isomerize into naringenin. The protein is Chalcone synthase A (CHSA) of Petunia hybrida (Petunia).